The sequence spans 379 residues: Glutamate 5-kinase (379 aa).

K8 provides a ligand contact to ATP. Residues S49, D136, and N148 each coordinate substrate. ATP-binding positions include 168-169 and 211-217; these read TD and TGGMATK. One can recognise a PUA domain in the interval 276 to 354; that stretch reads MGKIYLDAGA…ERIASLLGYM (79 aa).

Belongs to the glutamate 5-kinase family.

The protein localises to the cytoplasm. The catalysed reaction is L-glutamate + ATP = L-glutamyl 5-phosphate + ADP. The protein operates within amino-acid biosynthesis; L-proline biosynthesis; L-glutamate 5-semialdehyde from L-glutamate: step 1/2. Catalyzes the transfer of a phosphate group to glutamate to form L-glutamate 5-phosphate. The sequence is that of Glutamate 5-kinase from Microcystis aeruginosa (strain NIES-843 / IAM M-2473).